The chain runs to 196 residues: 3-isopropylmalate dehydratase small subunit (196 aa).

Belongs to the LeuD family. LeuD type 1 subfamily. Heterodimer of LeuC and LeuD.

The catalysed reaction is (2R,3S)-3-isopropylmalate = (2S)-2-isopropylmalate. It participates in amino-acid biosynthesis; L-leucine biosynthesis; L-leucine from 3-methyl-2-oxobutanoate: step 2/4. Its function is as follows. Catalyzes the isomerization between 2-isopropylmalate and 3-isopropylmalate, via the formation of 2-isopropylmaleate. This is 3-isopropylmalate dehydratase small subunit from Corynebacterium aurimucosum (strain ATCC 700975 / DSM 44827 / CIP 107346 / CN-1) (Corynebacterium nigricans).